Reading from the N-terminus, the 919-residue chain is Glutamate receptor ionotropic, kainate 3 (919 aa).

A signal peptide spans 1-31; the sequence is MTAPWRRLRSLVWEYWAGFLVCAFWIPDSRG. Over 32–563 the chain is Extracellular; that stretch reads MPHVIRIGGI…VFSFLNPLSP (532 aa). Residues Asn-70, Asn-76, Asn-278, Asn-381, Asn-415, Asn-426, and Asn-433 are each glycosylated (N-linked (GlcNAc...) asparagine). A disulfide bond links Cys-99 and Cys-350. L-glutamate is bound by residues Pro-518, Thr-520, and Arg-525. Asn-548 and Asn-551 each carry an N-linked (GlcNAc...) asparagine glycan. The chain crosses the membrane as a helical span at residues 564 to 584; that stretch reads DIWMYVLLAYLGVSCVLFVIA. Over 585–636 the chain is Cytoplasmic; that stretch reads RFSPYEWYDAHPCNPGSEVVENNFTLLNSFWFGMGSLMQQGSELMPKALSTR. Residues 637–657 traverse the membrane as a helical segment; that stretch reads IIGGIWWFFTLIIISSYTANL. The Extracellular portion of the chain corresponds to 658-820; it reads AAFLTVERME…KEASALGIQK (163 aa). L-glutamate contacts are provided by Ala-691, Thr-692, and Glu-739. Asn-752 carries an N-linked (GlcNAc...) asparagine glycan. Residues 821 to 841 form a helical membrane-spanning segment; it reads IGGIFIVLAAGLVLSVLVAVG. The Cytoplasmic segment spans residues 842–919; sequence EFIYKLRKTA…CSTSLAPVFP (78 aa). The residue at position 869 (Ser-869) is a Phosphoserine. Lys-887 participates in a covalent cross-link: Glycyl lysine isopeptide (Lys-Gly) (interchain with G-Cter in SUMO1).

Belongs to the glutamate-gated ion channel (TC 1.A.10.1) family. GRIK3 subfamily. As to quaternary structure, homotetramer, and heterotetramer with either GRIK4 or GRIK5. Can form functional heteromeric receptors with GRIK2. Interacts with PRKCABP. Interacts with NETO2. In terms of tissue distribution, detected in whole brain, cerebellum, brain cortex and hippocampus.

Its subcellular location is the cell membrane. The protein resides in the postsynaptic cell membrane. The catalysed reaction is Ca(2+)(in) = Ca(2+)(out). Its activity is regulated as follows. Glutamate-gated receptor activity inhibited by spermine. Ionotropic glutamate receptor that functions as a cation-permeable ligand-gated ion channel, gated by L-glutamate and the glutamatergic agonist kainic acid. Binding of the excitatory neurotransmitter L-glutamate induces a conformation change, leading to the opening of the cation channel, and thereby converts the chemical signal to an electrical impulse. The receptor then desensitizes rapidly and enters a transient inactive state, characterized by the presence of bound agonist. In association with GRIK2, involved in presynaptic facilitation of glutamate release at hippocampal mossy fiber synapses. The polypeptide is Glutamate receptor ionotropic, kainate 3 (Grik3) (Mus musculus (Mouse)).